Here is a 319-residue protein sequence, read N- to C-terminus: Putative antiporter CaxA (319 aa).

Helical transmembrane passes span 3-23 (VATI…DRFV), 38-58 (MIIG…MVSA), 81-101 (ILLV…SMTI), 105-125 (FPLL…QSLT), 127-147 (AEGA…VYWG), 175-195 (VWLV…VHGA), 208-228 (LIGL…ASLI), 250-270 (ILAV…AAAA), 275-292 (YVMM…LRLG), and 297-317 (INRV…YLLF).

The protein belongs to the Ca(2+):cation antiporter (CaCA) (TC 2.A.19) family.

It is found in the cell membrane. Confers modest Ca(2+) and Na(+) resistance. The protein is Putative antiporter CaxA (caxA) of Alkalimonas amylolytica.